The primary structure comprises 469 residues: Beta-1,3-xylanase (469 aa).

Residues 1–22 form the signal peptide; the sequence is MKKLAKMISIATLGACAFSAHA. The 271-residue stretch at 23-293 folds into the GH26 domain; sequence LDGKLVPNEG…LKGFTYINAD (271 aa). Catalysis depends on glutamate 138, which acts as the Proton donor. Glutamate 234 acts as the Nucleophile in catalysis. The span at 352-374 shows a compositional bias: gly residues; it reads DNGGDNGGDNGGDNGGDNGGDNG. The interval 352–380 is disordered; that stretch reads DNGGDNGGDNGGDNGGDNGGDNGGTEPPE. The segment at 377-469 is carbohydrate binding module (CBM); it reads EPPENCQDDF…NITFTTQVCN (93 aa). Intrachain disulfides connect cysteine 382-cysteine 468 and cysteine 413-cysteine 418.

The protein belongs to the glycosyl hydrolase 26 family.

It carries out the reaction Random hydrolysis of (1-&gt;3)-beta-D-glycosidic linkages in (1-&gt;3)-beta-D-xylans.. With respect to regulation, completely inhibited by CuCl(2), FeCl(3), HgCl(2) and N-bromosuccinimide. Moderately inhibited by AgCl, AlCl(3), Pb(CH(3)COO)(2) and dithiothreitol. BaCl(2), CaCl(2), KCl, MgCl(2), MnCl(2), NaCl, ZnCl(2), ethylenediaminetetraacetic acid, N-ethylmaleimide, iodoacetic acid and p-chloromercuribenzoic acid have little or no effect on activity. Its function is as follows. Catalyzes the hydrolysis of beta-1,3-xylan into oligosaccharides, mainly xylotriose and xylobiose with smaller amounts of xylotetraose, xylose, xylopentaose and xylohexaose. Does not hydrolyze xylobiose, p-nitrophenyl-beta-xyloside, beta-1,4-xylan, carboxymethylcellulose, curdlan, glucomannan or beta-1,4-mannan. This is Beta-1,3-xylanase from Alcaligenes sp.